Reading from the N-terminus, the 81-residue chain is MAVQLFKTLLNQIPLLSSLQSGTLPLFGYSGWGRPMKKAHTGESGLKWEAKDSSKLIGNKDHALRGLSSPMAVIRQIRLIT.

This is an uncharacterized protein from Escherichia coli (strain K12).